A 92-amino-acid polypeptide reads, in one-letter code: Probable Fe(2+)-trafficking protein (92 aa).

The protein belongs to the Fe(2+)-trafficking protein family.

In terms of biological role, could be a mediator in iron transactions between iron acquisition and iron-requiring processes, such as synthesis and/or repair of Fe-S clusters in biosynthetic enzymes. This is Probable Fe(2+)-trafficking protein from Xanthomonas oryzae pv. oryzae (strain MAFF 311018).